The primary structure comprises 368 residues: 4-hydroxy-3-methylbut-2-en-1-yl diphosphate synthase (flavodoxin) (368 aa).

Residues C268, C271, C303, and E310 each contribute to the [4Fe-4S] cluster site.

Belongs to the IspG family. The cofactor is [4Fe-4S] cluster.

It carries out the reaction (2E)-4-hydroxy-3-methylbut-2-enyl diphosphate + oxidized [flavodoxin] + H2O + 2 H(+) = 2-C-methyl-D-erythritol 2,4-cyclic diphosphate + reduced [flavodoxin]. It participates in isoprenoid biosynthesis; isopentenyl diphosphate biosynthesis via DXP pathway; isopentenyl diphosphate from 1-deoxy-D-xylulose 5-phosphate: step 5/6. Its function is as follows. Converts 2C-methyl-D-erythritol 2,4-cyclodiphosphate (ME-2,4cPP) into 1-hydroxy-2-methyl-2-(E)-butenyl 4-diphosphate. The protein is 4-hydroxy-3-methylbut-2-en-1-yl diphosphate synthase (flavodoxin) of Listeria monocytogenes serotype 4b (strain F2365).